The sequence spans 946 residues: Serine/arginine repetitive matrix protein 1 (946 aa).

N-acetylmethionine is present on methionine 1. The tract at residues 1–151 (MDAGFFRGTS…ASLKKQDEDK (151 aa)) is necessary for DNA and RNA-binding. The tract at residues 1–156 (MDAGFFRGTS…QDEDKDKRDK (156 aa)) is necessary for mRNA 3'-end cleavage and cytoplasmic accumulation. The residue at position 7 (arginine 7) is a Citrulline. Residues 27-126 (QLKFAECLEK…AGIPSAFLEL (100 aa)) form the PWI domain. A Glycyl lysine isopeptide (Lys-Gly) (interchain with G-Cter in SUMO2) cross-link involves residue lysine 127. N6-acetyllysine is present on lysine 140. Basic and acidic residues predominate over residues 142-170 (ASLKKQDEDKDKRDKEEKESSREKRERSR). The interval 142-946 (ASLKKQDEDK…MRKAQVSPQS (805 aa)) is disordered. The segment covering 171-207 (SPRRRKSRSPSPRRRSSPVRRERKRSHSRSPRHRTKS) has biased composition (basic residues). Residues 214-234 (PEKKEKSPELPEPSVRMKDSS) are compositionally biased toward basic and acidic residues. Phosphoserine occurs at positions 220 and 227. A Glycyl lysine isopeptide (Lys-Gly) (interchain with G-Cter in SUMO1); alternate cross-link involves residue lysine 231. Lysine 231 participates in a covalent cross-link: Glycyl lysine isopeptide (Lys-Gly) (interchain with G-Cter in SUMO2); alternate. Serine 234 and serine 240 each carry phosphoserine. Phosphothreonine is present on threonine 241. Over residues 246 to 273 (KAPKPEPVPEPKEPSPEKNSKKEKEKTR) the composition is skewed to basic and acidic residues. Lysine 249 participates in a covalent cross-link: Glycyl lysine isopeptide (Lys-Gly) (interchain with G-Cter in SUMO2). Residue serine 260 is modified to Phosphoserine. Basic residues-rich tracts occupy residues 274-327 (PRSR…RTPP) and 334-349 (PRHR…RRRS). Residues 298–707 (RRHRSRSRSY…NKRHSPSPRP (410 aa)) form a necessary for speckles and matrix localization region. A compositionally biased stretch (low complexity) spans 350–366 (SASLSGSSSSSSSSRSR). Phosphoserine occurs at positions 387, 389, 391, and 400. Threonine 404 carries the post-translational modification Phosphothreonine. Position 412 is a phosphoserine (serine 412). The residue at position 414 (threonine 414) is a Phosphothreonine. 4 positions are modified to phosphoserine: serine 418, serine 427, serine 429, and serine 434. Residues 426-436 (VSVSPGRTSGK) are compositionally biased toward polar residues. A Glycyl lysine isopeptide (Lys-Gly) (interchain with G-Cter in SUMO2) cross-link involves residue lysine 445. A phosphoserine mark is found at serine 448 and serine 450. Residue lysine 457 forms a Glycyl lysine isopeptide (Lys-Gly) (interchain with G-Cter in SUMO2) linkage. 2 positions are modified to phosphoserine: serine 461 and serine 463. A Glycyl lysine isopeptide (Lys-Gly) (interchain with G-Cter in SUMO2) cross-link involves residue lysine 470. Serine 476 is modified (phosphoserine). Residues 476 to 499 (SVQQRRQYRRQNQQSSSDSGSSST) are compositionally biased toward low complexity. Residues 501-516 (EDERPKRSHVKNGEVG) show a composition bias toward basic and acidic residues. Phosphoserine occurs at positions 522, 524, 526, 528, 530, 561, 563, 572, and 574. Basic residues predominate over residues 555-572 (SSRRRRSPSPPPARRRRS). Over residues 574–585 (SPAPPPPPPPPP) the composition is skewed to pro residues. Positions 586 to 611 (PRRRRSPTPPPRRRTPSPPPRRRSPS) are enriched in basic residues. Threonine 593 and threonine 600 each carry phosphothreonine. Serine 602 is modified (phosphoserine). The span at 612-624 (PRRYSPPIQRRYS) shows a compositional bias: low complexity. Tyrosine 615 bears the Phosphotyrosine mark. Phosphoserine occurs at positions 616, 624, and 626. Residue threonine 633 is modified to Phosphothreonine. Serine 635, serine 645, serine 647, serine 655, and serine 657 each carry phosphoserine. Residues 640–655 (PKRRASPSPPPKRRVS) are compositionally biased toward basic residues. A compositionally biased stretch (basic residues) spans 668 to 682 (TKRRSPSLSSKHRKG). The segment covering 704-718 (SPRPRAPQTSSPPPV) has biased composition (pro residues). Phosphoserine is present on residues serine 713, serine 714, serine 723, serine 725, serine 731, and serine 733. Positions 724-736 (ASPQGRQSPSPST) are enriched in polar residues. At threonine 736 the chain carries Phosphothreonine. Serine 779, serine 781, serine 789, serine 793, serine 795, serine 797, serine 810, serine 814, serine 816, and serine 818 each carry phosphoserine. Low complexity predominate over residues 779–800 (SPSPQSVRRVSSSRSVSGSPEP). At threonine 819 the chain carries Phosphothreonine. 2 positions are modified to phosphoserine: serine 822 and serine 832. Polar residues predominate over residues 833-842 (PTPSLSPARN). Position 834 is a phosphothreonine (threonine 834). Serine 836, serine 838, and serine 843 each carry phosphoserine. Positions 850-875 (KKKKKKKDKKHKKDKKHKKHKKHKKE) are enriched in basic residues. A compositionally biased stretch (low complexity) spans 878–907 (VTIATPATAAPAAVSAATTTSAQEEPAAAP). Position 913 is a phosphothreonine (threonine 913). Position 915 is a phosphoserine (serine 915). Basic and acidic residues predominate over residues 924–934 (DLERHLREKAL). Residue serine 943 is modified to Phosphoserine.

It belongs to the splicing factor SR family. As to quaternary structure, identified in the spliceosome C complex. Found in a pre-mRNA splicing complex with SFRS4, SFRS5, SNRP70, SNRPA1, SRRM1 and SRRM2. Component of the minor spliceosome, which splices U12-type introns. Found in a pre-mRNA exonic splicing enhancer (ESE) complex with SNRP70, SNRPA1, SRRM1 and TRA2B/SFRS10. Found in a mRNA splicing-dependent exon junction complex (EJC) with DEK, PRPF8, NCBP1, RBM8A, RNPS1, SRRM1 and ALYREF/THOC4. Interacts with DDX39B, CPSF1, RBM8A, RNPS1, and ALYREF/THOC4. Seems to be a compound of RNA export complexes that are released from speckles in a ATP-dependent manner. Citrullinated by PADI4. Post-translationally, phosphorylated on multiple serine and threonine residues by DYRK3 during the G2-to-M transition, after the nuclear-envelope breakdown. Phosphorylation by DYRK3 promotes disassembly of nuclear speckles.

The protein localises to the nucleus matrix. It localises to the nucleus speckle. Part of pre- and post-splicing multiprotein mRNP complexes. As a component of the minor spliceosome, involved in the splicing of U12-type introns in pre-mRNAs. Involved in numerous pre-mRNA processing events. Promotes constitutive and exonic splicing enhancer (ESE)-dependent splicing activation by bridging together sequence-specific (SR family proteins, SFRS4, SFRS5 and TRA2B/SFRS10) and basal snRNP (SNRP70 and SNRPA1) factors of the spliceosome. Stimulates mRNA 3'-end cleavage independently of the formation of an exon junction complex. Binds both pre-mRNA and spliced mRNA 20-25 nt upstream of exon-exon junctions. Binds RNA and DNA with low sequence specificity and has similar preference for either double- or single-stranded nucleic acid substrates. This chain is Serine/arginine repetitive matrix protein 1 (Srrm1), found in Mus musculus (Mouse).